Reading from the N-terminus, the 328-residue chain is Putative tyrosine-protein kinase C03B1.5 (328 aa).

Positions 25–288 (WSPALKIGSG…ALHASSQTYL (264 aa)) constitute a Protein kinase domain. ATP-binding positions include 31 to 39 (IGSGAFGEV) and lysine 62. Catalysis depends on aspartate 155, which acts as the Proton acceptor.

This sequence belongs to the protein kinase superfamily. Tyr protein kinase family.

The enzyme catalyses L-tyrosyl-[protein] + ATP = O-phospho-L-tyrosyl-[protein] + ADP + H(+). This is Putative tyrosine-protein kinase C03B1.5 from Caenorhabditis elegans.